Consider the following 352-residue polypeptide: Chorismate synthase (352 aa).

NADP(+) is bound by residues Arg48 and Arg54. FMN-binding positions include 125–127 (RAS), 238–239 (NA), Ala278, 293–297 (KPASS), and Arg319.

The protein belongs to the chorismate synthase family. As to quaternary structure, homotetramer. It depends on FMNH2 as a cofactor.

The enzyme catalyses 5-O-(1-carboxyvinyl)-3-phosphoshikimate = chorismate + phosphate. Its pathway is metabolic intermediate biosynthesis; chorismate biosynthesis; chorismate from D-erythrose 4-phosphate and phosphoenolpyruvate: step 7/7. Its function is as follows. Catalyzes the anti-1,4-elimination of the C-3 phosphate and the C-6 proR hydrogen from 5-enolpyruvylshikimate-3-phosphate (EPSP) to yield chorismate, which is the branch point compound that serves as the starting substrate for the three terminal pathways of aromatic amino acid biosynthesis. This reaction introduces a second double bond into the aromatic ring system. The sequence is that of Chorismate synthase from Coxiella burnetii (strain RSA 493 / Nine Mile phase I).